Reading from the N-terminus, the 400-residue chain is Homoserine O-acetyltransferase (400 aa).

Over residues methionine 1–alanine 11 the composition is skewed to polar residues. The tract at residues methionine 1–proline 24 is disordered. Over residues histidine 13 to histidine 23 the composition is skewed to basic and acidic residues. The AB hydrolase-1 domain maps to asparagine 64 to leucine 373. Catalysis depends on serine 169, which acts as the Nucleophile. Residue arginine 239 coordinates substrate. Catalysis depends on residues aspartate 335 and histidine 368. A substrate-binding site is contributed by aspartate 369.

The protein belongs to the AB hydrolase superfamily. MetX family. In terms of assembly, homodimer.

Its subcellular location is the cytoplasm. It catalyses the reaction L-homoserine + acetyl-CoA = O-acetyl-L-homoserine + CoA. The protein operates within amino-acid biosynthesis; L-methionine biosynthesis via de novo pathway; O-acetyl-L-homoserine from L-homoserine: step 1/1. Its function is as follows. Transfers an acetyl group from acetyl-CoA to L-homoserine, forming acetyl-L-homoserine. This chain is Homoserine O-acetyltransferase, found in Rhodopseudomonas palustris (strain BisB18).